Reading from the N-terminus, the 329-residue chain is Cathepsin K (329 aa).

An N-terminal signal peptide occupies residues 1–15; sequence MWGLKVLLLPVVSFA. A propeptide spans 16-114 (activation peptide); that stretch reads LHPEEILDTQ…TLYIPDWEGR (99 aa). An N-linked (GlcNAc...) asparagine glycan is attached at Asn103. Cystine bridges form between Cys136/Cys177 and Cys170/Cys210. The active site involves Cys139. A glycan (N-linked (GlcNAc...) asparagine) is linked at Asn268. Cys269 and Cys318 are oxidised to a cystine. Catalysis depends on residues His276 and Asn296.

The protein belongs to the peptidase C1 family. In terms of tissue distribution, predominantly expressed in osteclasts (bones).

The protein localises to the lysosome. It localises to the secreted. The protein resides in the apical cell membrane. It catalyses the reaction Broad proteolytic activity. With small-molecule substrates and inhibitors, the major determinant of specificity is P2, which is preferably Leu, Met &gt; Phe, and not Arg.. Thiol protease involved in osteoclastic bone resorption and may participate partially in the disorder of bone remodeling. Displays potent endoprotease activity against fibrinogen at acid pH. May play an important role in extracellular matrix degradation. Involved in the release of thyroid hormone thyroxine (T4) by limited proteolysis of TG/thyroglobulin in the thyroid follicle lumen. This chain is Cathepsin K (CTSK), found in Oryctolagus cuniculus (Rabbit).